We begin with the raw amino-acid sequence, 304 residues long: Non-specific ribonucleoside hydrolase RihC (304 aa).

His-233 is a catalytic residue.

The protein belongs to the IUNH family. RihC subfamily.

Hydrolyzes both purine and pyrimidine ribonucleosides with a broad-substrate specificity. This is Non-specific ribonucleoside hydrolase RihC from Shigella flexneri serotype 5b (strain 8401).